The chain runs to 1073 residues: Probable cellulose synthase A catalytic subunit 2 [UDP-forming] (1073 aa).

The Cytoplasmic portion of the chain corresponds to 1–270; it reads MDGAKSGKQC…SSSRINPYRM (270 aa). The Zn(2+) site is built by Cys13, Cys16, Cys32, Cys35, Cys40, Cys43, Cys55, and Cys58. The RING-type; degenerate zinc finger occupies 13–59; that stretch reads CQICGDGVGTAADGELFTACDVCGFPVCRPCYEYERKDGSQACPQCK. Positions 66–98 are disordered; that stretch reads KGSPPILGDESDDVDADDASDVNYPTSGNQDHK. The span at 74 to 85 shows a compositional bias: acidic residues; that stretch reads DESDDVDADDAS. Residues 271–291 traverse the membrane as a helical segment; that stretch reads VIVLRLIVLCIFLHYRITNPV. Over 292–293 the chain is Extracellular; sequence RN. Residues 294–314 traverse the membrane as a helical segment; that stretch reads AYPLWLLSVICEIWFALSWIL. Over 315–856 the chain is Cytoplasmic; sequence DQFPKWSPIN…INTTIYPLTS (542 aa). Positions 353, 359, 360, and 389 each coordinate UDP-alpha-D-glucose. Residue Asp389 is part of the active site. Positions 443–470 form a coiled coil; that stretch reads VKDRRAMKREYEEFKVRVNALVAKAQKV. Lys530 is a UDP-alpha-D-glucose binding site. Residues Lys531 and Asp555 each contribute to the Mn(2+) site. The interval 655–676 is disordered; the sequence is GGRKKTKKSKEKSTEKKKSHKH. Asp773 is a catalytic residue. A helical transmembrane segment spans residues 857 to 877; it reads IPLLLYCILPAICLLTGKFII. Topologically, residues 878 to 882 are extracellular; it reads PEISN. Residues 883-903 form a helical membrane-spanning segment; it reads FASIWFISLFLSIFATGILEM. Over 904–918 the chain is Cytoplasmic; that stretch reads RWSGVGIDEWWRNEQ. A helical membrane pass occupies residues 919–939; sequence FWVIGGISAHLFAVFQGLLKV. Residues 940–969 are Extracellular-facing; it reads LAGIDTSFTVTSKASDEEGDFAELYMFKWT. A helical membrane pass occupies residues 970-990; sequence TLLIPPTTILIINLVGVVAGI. Over 991–1001 the chain is Cytoplasmic; the sequence is SYAINSGYQSW. A helical membrane pass occupies residues 1002 to 1022; it reads GPLFGKLFFAFWVIVHLYPFL. The Extracellular segment spans residues 1023-1031; it reads KGLMGRQNR. The helical transmembrane segment at 1032 to 1052 threads the bilayer; sequence TPTIVVVWAILLASIFSLLWV. At 1053 to 1073 the chain is on the cytoplasmic side; that stretch reads RIDPFTTRVTGPDTQKCGINC.

It belongs to the glycosyltransferase 2 family. Plant cellulose synthase subfamily. The cofactor is Mn(2+). Requires Zn(2+) as cofactor.

The protein resides in the cell membrane. It carries out the reaction [(1-&gt;4)-beta-D-glucosyl](n) + UDP-alpha-D-glucose = [(1-&gt;4)-beta-D-glucosyl](n+1) + UDP + H(+). It participates in glycan metabolism; plant cellulose biosynthesis. In terms of biological role, probable catalytic subunit of cellulose synthase terminal complexes ('rosettes'), required for beta-1,4-glucan microfibril crystallization, a major mechanism of the cell wall formation. In Oryza sativa subsp. japonica (Rice), this protein is Probable cellulose synthase A catalytic subunit 2 [UDP-forming] (CESA2).